The sequence spans 526 residues: Chaperonin GroEL, chloroplastic (526 aa).

ATP-binding positions include 29–32 (TLGP), 86–90 (DGTTT), Gly412, 476–478 (DAA), and Asp492.

It belongs to the chaperonin (HSP60) family. Forms a cylinder of 14 subunits composed of two heptameric rings stacked back-to-back. Interacts with the co-chaperonin GroES.

It is found in the plastid. The protein localises to the chloroplast. The enzyme catalyses ATP + H2O + a folded polypeptide = ADP + phosphate + an unfolded polypeptide.. Functionally, together with its co-chaperonin GroES, plays an essential role in assisting protein folding. The GroEL-GroES system forms a nano-cage that allows encapsulation of the non-native substrate proteins and provides a physical environment optimized to promote and accelerate protein folding. The chain is Chaperonin GroEL, chloroplastic from Cyanidioschyzon merolae (strain NIES-3377 / 10D) (Unicellular red alga).